Here is a 280-residue protein sequence, read N- to C-terminus: Elongation factor 1-delta (280 aa).

Ala2 carries the N-acetylalanine modification. Lys17 carries the N6-acetyllysine modification. Residues Ser37, Ser44, Ser60, Ser86, and Ser106 each carry the phosphoserine modification. N6-acetyllysine is present on Lys107. The interval 113-171 is disordered; that stretch reads SALEKSSPAHRATTPQTQHVSPMRQVEPPSRKAATATEDDEDDDIDLFGSDEEEDKEAT. Residue Lys117 is modified to N6-acetyllysine; alternate. Residue Lys117 is modified to N6-succinyllysine; alternate. Phosphoserine is present on Ser119. Phosphothreonine is present on Thr129. Ser133 is modified (phosphoserine). Position 147 is a phosphothreonine (Thr147). Residues 149-168 show a composition bias toward acidic residues; sequence TEDDEDDDIDLFGSDEEEDK. Ser162 bears the Phosphoserine; by CK2 mark.

This sequence belongs to the EF-1-beta/EF-1-delta family. EF-1 is composed of 4 subunits: alpha, beta, delta, and gamma.

In terms of biological role, EF-1-beta and EF-1-delta stimulate the exchange of GDP bound to EF-1-alpha to GTP. This is Elongation factor 1-delta (EEF1D) from Bos taurus (Bovine).